Reading from the N-terminus, the 275-residue chain is Rhamnulose-1-phosphate aldolase (275 aa).

Residue E117 is part of the active site. Zn(2+) contacts are provided by H141, H143, and H212.

It belongs to the aldolase class II family. RhaD subfamily. Homotetramer. Zn(2+) serves as cofactor.

It is found in the cytoplasm. The catalysed reaction is L-rhamnulose 1-phosphate = (S)-lactaldehyde + dihydroxyacetone phosphate. It functions in the pathway carbohydrate degradation; L-rhamnose degradation; glycerone phosphate from L-rhamnose: step 3/3. In terms of biological role, catalyzes the reversible cleavage of L-rhamnulose-1-phosphate to dihydroxyacetone phosphate (DHAP) and L-lactaldehyde. This is Rhamnulose-1-phosphate aldolase from Salmonella paratyphi B (strain ATCC BAA-1250 / SPB7).